Reading from the N-terminus, the 242-residue chain is Galectin-3 (242 aa).

The tract at residues 1-35 is disordered; it reads MADGFSLNDALSGSGHPPNQGWPGPWGNQPAGPGG. Residue Ala2 is modified to N-acetylalanine. Ser6 carries the phosphoserine; by CK1 modification. Ser12 carries the post-translational modification Phosphoserine. Over residues 17 to 31 the composition is skewed to low complexity; that stretch reads PPNQGWPGPWGNQPA. 4 consecutive repeat copies span residues 35–43, 44–52, 53–61, and 62–70. The tract at residues 35-98 is 7 X 9 AA tandem repeats of Y-P-G-X(3)-P-[GS]-A; sequence GYPGAAYPGA…GAGAYPGASP (64 aa). Residues 55 to 93 are disordered; the sequence is GQAPPGPYPGPGAHGAYPGQPGGPGAYPSPGQPSGAGAY. The 5; approximate repeat unit spans residues 71–80; it reads YPGQPGGPGA. Residues 80–93 show a composition bias toward low complexity; sequence AYPSPGQPSGAGAY. The stretch at 81 to 92 is one 6; approximate repeat; it reads YPSPGQPSGAGA. A 7; truncated repeat occupies 93–98; the sequence is YPGASP. One can recognise a Galectin domain in the interval 110-240; that stretch reads YDLPLPGGVM…DIQLTSASHA (131 aa). Position 173–181 (173–181) interacts with a beta-D-galactoside; sequence WGREERQTT. Residues 218–233 carry the Nuclear export signal motif; sequence RNLKEINKLGISGDIQ.

As to quaternary structure, probably forms homo- or heterodimers. Interacts with DMBT1. Interacts with CD6 and ALCAM. Forms a complex with the ITGA3, ITGB1 and CSPG4. Interacts with LGALS3BP, LYPD3, ZFTRAF1 and UACA. Interacts with TRIM16; this interaction mediates autophagy of damage endomembranes. Interacts with cargo receptor TMED10; the interaction mediates the translocation from the cytoplasm into the ERGIC (endoplasmic reticulum-Golgi intermediate compartment) and thereby secretion. Interacts with and inhibits by binding NCR3/NKp30.

Its subcellular location is the cytoplasm. It localises to the nucleus. It is found in the secreted. Functionally, galactose-specific lectin which binds IgE. May mediate with the alpha-3, beta-1 integrin the stimulation by CSPG4 of endothelial cells migration. Together with DMBT1, required for terminal differentiation of columnar epithelial cells during early embryogenesis. In the nucleus: acts as a pre-mRNA splicing factor. Involved in acute inflammatory responses including neutrophil activation and adhesion, chemoattraction of monocytes macrophages, opsonization of apoptotic neutrophils, and activation of mast cells. Together with TRIM16, coordinates the recognition of membrane damage with mobilization of the core autophagy regulators ATG16L1 and BECN1 in response to damaged endomembranes. When secreted, interacts with NK cell-activating receptor NCR3/NKp30 acting as an inhibitory ligand which antagonizes NK cell attack. This Oryctolagus cuniculus (Rabbit) protein is Galectin-3 (LGALS3).